The chain runs to 409 residues: Putative integrase/recombinase y4rA (409 aa).

The region spanning 112–197 (SAVEQHVQAY…ALRSFLSYAR (86 aa)) is the Core-binding (CB) domain. In terms of domain architecture, Tyr recombinase spans 220 to 402 (SIPRAIGRDD…DLDALRTLAL (183 aa)). Active-site residues include arginine 260, lysine 284, histidine 354, arginine 357, and histidine 380. Tyrosine 389 functions as the O-(3'-phospho-DNA)-tyrosine intermediate in the catalytic mechanism.

This sequence belongs to the 'phage' integrase family.

The sequence is that of Putative integrase/recombinase y4rA from Sinorhizobium fredii (strain NBRC 101917 / NGR234).